The sequence spans 87 residues: Omega-lycotoxin-Am1d (87 aa).

The first 17 residues, 1–17 (MKLSIFFVLFFIAIAYC), serve as a signal peptide directing secretion. A propeptide spanning residues 18 to 40 (QPEFLDDEEDEVEETLPVAEEGR) is cleaved from the precursor. Cystine bridges form between Cys-44/Cys-59, Cys-51/Cys-64, Cys-58/Cys-84, and Cys-66/Cys-82.

This sequence belongs to the neurotoxin omega-lctx family. Expressed by the venom gland.

The protein localises to the secreted. In terms of biological role, modulates Cav2.1/CACNA1A voltage-gated calcium channels (P/Q-type currents) in rat cerebellar Purkinje cells and hippocampal CA1-CA3 neurons. At saturating concentrations (&gt;10 nM) decelerates activation kinetics and slightly increases peak amplitude without affecting deactivation kinetics. In vivo, does not cause death when intravenously injected into mice. In rat models, through its activity on Cav2.1/CACNA1A, has an ameliorative effect on memory defects provoked by hyperstimulation of N-methyl-D-aspartate receptors (NMDARs) in the hippocampus. In Alopecosa marikovskyi (Wolf spider), this protein is Omega-lycotoxin-Am1d.